Here is a 361-residue protein sequence, read N- to C-terminus: MDNSYKIKVQHVTKEYDLYKSQAEKLRSFFSLSNSKVPHFWSLMGISLEVKAGETLGLIGVNGSGKSTLSNIISGIIPQTTGTVEVRGDTSIIAIGAGLRGNLTGLENIRLKALMQGLTNPEIDALMDDIVSFADIGDFLYQPVKSYSSGMKSRLGFSIAVHVNPDILIIDEALSVGDDTFYQKCVDKISEFKDEGKTIVFVSHSLKQIEILCDRVAWIHYGTLKEIGATETVVKHYREFTKWFKGQSKKEKKHFQRQMKANQKAFDIDAYQQQVIEERQANDPNDQNVAAEVKKDFYGSVISEKMSWGNRFLTIAVGIVFVLACLINVSGHSLGDVLQNPGNIVHPETVLHDTNATSGVK.

The 234-residue stretch at 13 to 246 folds into the ABC transporter domain; the sequence is TKEYDLYKSQ…YREFTKWFKG (234 aa). 60 to 67 is a binding site for ATP; the sequence is GVNGSGKS. A unknown region spans residues 247-361; it reads QSKKEKKHFQ…HDTNATSGVK (115 aa).

The protein belongs to the ABC transporter superfamily. Teichoic acids exporter (TC 3.A.1.104.1) family. The complex is composed of two ATP-binding proteins (TagH) and two transmembrane proteins (TagG).

It localises to the cell membrane. It catalyses the reaction ATP + H2O + teichoic acidSide 1 = ADP + phosphate + teichoic acidSide 2.. Part of the ABC transporter complex TagGH involved in teichoic acids export. Responsible for energy coupling to the transport system. The polypeptide is Teichoic acids export ATP-binding protein TagH (Levilactobacillus brevis (strain ATCC 367 / BCRC 12310 / CIP 105137 / JCM 1170 / LMG 11437 / NCIMB 947 / NCTC 947) (Lactobacillus brevis)).